Here is a 229-residue protein sequence, read N- to C-terminus: Large ribosomal subunit protein uL1 (229 aa).

It belongs to the universal ribosomal protein uL1 family. As to quaternary structure, part of the 50S ribosomal subunit.

Binds directly to 23S rRNA. The L1 stalk is quite mobile in the ribosome, and is involved in E site tRNA release. In terms of biological role, protein L1 is also a translational repressor protein, it controls the translation of the L11 operon by binding to its mRNA. In Rhodopseudomonas palustris (strain BisB5), this protein is Large ribosomal subunit protein uL1.